Reading from the N-terminus, the 676-residue chain is RNA helicase NPH-II (676 aa).

In terms of domain architecture, Helicase ATP-binding spans 172–347 (FSAWISHRPV…VFLPNPAFIH (176 aa)). 185 to 192 (GGTGVGKT) lines the ATP pocket. The DEXH box motif lies at 296 to 299 (DEVH). Positions 366–542 (NPSSRMAYIE…KFNLTLPEDL (177 aa)) constitute a Helicase C-terminal domain.

The protein belongs to the DEAD box helicase family. DEAH subfamily. As to quaternary structure, monomer.

It is found in the virion. It carries out the reaction ATP + H2O = ADP + phosphate + H(+). In terms of biological role, NTP-dependent helicase that catalyzes unidirectional unwinding of 3'tailed duplex RNAs and plays an important role during transcription of early mRNAs, presumably by preventing R-loop formation behind the elongating RNA polymerase. Might also play a role in the export of newly synthesized mRNA chains out of the core into the cytoplasm. Required for replication and propagation of viral particles. The polypeptide is RNA helicase NPH-II (OPG084) (Homo sapiens (Human)).